The chain runs to 3969 residues: Histone-lysine N-methyltransferase 2A (3969 aa).

Disordered stretches follow at residues 1 to 108, 132 to 253, and 301 to 352; these read MAHS…LLRV, VFGE…EDSL, and RRRG…RQSP. Residues 6–25 carry the Menin-binding motif (MBM) motif; the sequence is RWRFPARPGTTGGGGGGGRR. Residues 15-29 are compositionally biased toward gly residues; it reads TTGGGGGGGRRGLGG. 2 stretches are compositionally biased toward low complexity: residues 59–69 and 77–104; these read AVAAAAAAAGS and GAAA…SGPA. The short motif at 123 to 134 is the Integrase domain-binding motif 1 (IBM1) element; that stretch reads GTNLRRFRAVFG. Phosphoserine; by CK2 is present on residues S136 and S142. An Integrase domain-binding motif 2 (IBM2) motif is present at residues 147 to 152; the sequence is QFLGFG. The residue at position 153 (S153) is a Phosphoserine. Positions 169 to 180 form a DNA-binding region, a.T hook 1; that stretch reads KTSPRKPRGRPR. Phosphoserine is present on S197. 2 stretches are compositionally biased toward basic and acidic residues: residues 202–220 and 237–253; these read SETK…SIEK and HGKD…EDSL. The segment at residues 217–227 is a DNA-binding region (a.T hook 2); it reads SIEKKRGRPPT. At K239 the chain carries N6-acetyllysine. Positions 301-309 form a DNA-binding region, a.T hook 3; sequence RRRGRPPST. The span at 323-347 shows a compositional bias: basic and acidic residues; that stretch reads ELEKPQKVRKDKEGTPPLTKEDKTV. Position 373 is an N6-acetyllysine (K373). Positions 445-585 are disordered; it reads STPNSRFSAP…SSISDHTPWL (141 aa). Over residues 452-491 the composition is skewed to low complexity; sequence SAPSCGSSEKSSAASQHSSQMSSDSSRSSSPSVDTSTDSQ. A Phosphoserine modification is found at S518. The span at 546–559 shows a compositional bias: low complexity; it reads LSTLQSAPQQQTSS. The segment covering 560–573 has biased composition (pro residues); it reads SPPPPLLTPPPPLQ. K636 carries the N6-acetyllysine modification. S680 carries the post-translational modification Phosphoserine. 4 disordered regions span residues 713–780, 798–949, 1038–1066, and 1106–1166; these read ESVT…SSSL, FPSH…TSVT, EKSK…VRGP, and SSMG…VPED. Polar residues predominate over residues 716 to 732; the sequence is TLPSNRTSAGTSSSGVS. Low complexity predominate over residues 762-780; it reads LSSSELSPLTPPSSVSSSL. Polar residues predominate over residues 798–808; sequence FPSHSLTQSGE. A compositionally biased stretch (low complexity) spans 820–841; the sequence is TSAPAEPFSSSSPTPLFPWFTP. Position 840 is a phosphothreonine (T840). The span at 846-890 shows a compositional bias: basic and acidic residues; sequence ERGRNKDKAPEELSKDRDADKSVEKDKSRERDREREKENKRESRK. 2 positions are modified to phosphoserine: S926 and S1056. A compositionally biased stretch (polar residues) spans 1043–1062; it reads LKQTDQPKAQGQESDSSETS. K1130 is subject to N6-acetyllysine. The segment at 1147–1195 adopts a CXXC-type zinc-finger fold; sequence KKGRRSRRCGQCPGCQVPEDCGVCTNCLDKPKFGGRNIKKQCCKMRKCQ. Zn(2+)-binding residues include C1155, C1158, C1161, C1167, C1170, C1173, C1189, and C1194. A disordered region spans residues 1200 to 1375; it reads MPSKAYLQKQ…PPVNKQENAG (176 aa). Positions 1220–1232 are enriched in basic and acidic residues; the sequence is SKTSEKKDSKESS. Residues 1233 to 1243 show a composition bias toward low complexity; that stretch reads VVKNVVDSSQK. Residue K1235 is modified to N6-acetyllysine. Basic and acidic residues predominate over residues 1248-1273; it reads AREDPAPKKSSSEPPPRKPVEEKSEE. Residues 1284–1300 show a composition bias toward polar residues; that stretch reads KQATTPASRKSSKQVSQ. Residues 1304-1313 show a composition bias toward pro residues; it reads VIPPQPPTTG. 3 PHD-type zinc fingers span residues 1431-1482, 1479-1533, and 1566-1627; these read RVVC…CKFC, CKFC…CVRC, and GNFC…CTER. The interaction with histone H3K4me3 stretch occupies residues 1584 to 1600; it reads KMMQCGKCDRWVHSKCE. Residues 1635–1765 form the Bromo domain; sequence ALEKELQISL…SFFIRQMERV (131 aa). Disordered regions lie at residues 1663 to 1713 and 1806 to 1869; these read YRQA…GVKR and QERE…GIED. Residues 1826 to 1847 are compositionally biased toward pro residues; it reads APKPKGPGEPDSPTPLHPPTPP. S1837 is modified (phosphoserine). A Phosphothreonine modification is found at T1845. S1858 is subject to Phosphoserine. A C2HC pre-PHD-type zinc finger spans residues 1870–1910; it reads NRQCALCLTYGDDSANDAGRLLYIGQNEWTHVNCALWSAEV. Residues 1931 to 1978 form a PHD-type 4 zinc finger; that stretch reads LRCEFCQKPGATVGCCLTSCTSNYHFMCSRAKNCVFLDDKKVYCQRHR. The 57-residue stretch at 2018–2074 folds into the FYR N-terminal domain; the sequence is NIHMMIGSMTIDCLGILNDLSDCEDKLFPIGYQCSRVYWSTTDARKRCVYTCKIVEC. 7 disordered regions span residues 2081 to 2133, 2145 to 2232, 2275 to 2333, 2373 to 2460, 2475 to 2618, 2647 to 2675, and 2713 to 2821; these read PDIN…TSGS, IRTP…TTGT, NKNS…KLAP, RGQR…EGNL, GQRP…RYPR, FYSS…STSD, and KISQ…KNLL. The span at 2095–2115 shows a compositional bias: polar residues; that stretch reads IAHSPTSFTESSSKESQNTAE. S2098 carries the post-translational modification Phosphoserine. Residue T2147 is modified to Phosphothreonine. Phosphoserine occurs at positions 2151 and 2201. A compositionally biased stretch (polar residues) spans 2214–2232; sequence RTGNTYSRNNVSSVSTTGT. A compositionally biased stretch (low complexity) spans 2283-2302; that stretch reads SSSSEMKQSSASDLVSKSSS. Polar residues-rich tracts occupy residues 2310–2319 and 2406–2421; these read VLSSKSSEGS and GMSN…MGSS. Basic and acidic residues predominate over residues 2432 to 2442; it reads SCKETFKEKHS. Phosphothreonine is present on T2525. A Glycyl lysine isopeptide (Lys-Gly) (interchain with G-Cter in SUMO2) cross-link involves residue K2528. Polar residues-rich tracts occupy residues 2543-2563 and 2573-2592; these read SPAS…SASE and PSPN…QNLP. S2611 is subject to Phosphoserine. Positions 2726 to 2741 are enriched in polar residues; the sequence is SDTSVTATTRKSSQIP. The segment covering 2744-2782 has biased composition (basic and acidic residues); the sequence is NGKENGTENLKIDRPEDAGEKEHVTKSSVGHKNEPKMDN. Polar residues predominate over residues 2784–2795; that stretch reads HSVSRVKTQGQD. The residue at position 2796 (S2796) is a Phosphoserine. Positions 2796-2805 are enriched in low complexity; it reads SLEAQLSSLE. Residues 2812–2821 are compositionally biased toward polar residues; sequence TSTPSDKNLL. Positions 2847–2855 match the 9aaTAD motif; sequence SDIMDFVLK. S2955 bears the Phosphoserine mark. N6-acetyllysine is present on K2958. 2 disordered regions span residues 2961–3064 and 3166–3244; these read TITE…NAAV and PAAT…SNIA. Composition is skewed to polar residues over residues 2963-2972 and 3016-3030; these read TEKSVASSES and HGNN…STPG. The residue at position 3036 (S3036) is a Phosphoserine. Positions 3039 to 3064 are enriched in polar residues; it reads VPIQNQKYVPNSTDSPGPSQISNAAV. Positions 3171–3182 are enriched in low complexity; the sequence is SSFPPNISNPPS. A compositionally biased stretch (polar residues) spans 3198–3216; sequence VSESSQRTDLSTTVATPSS. Over residues 3218 to 3233 the composition is skewed to basic residues; the sequence is LKKRPISRLQTRKNKK. A Phosphothreonine modification is found at T3372. At K3462 the chain carries N6-acetyllysine. Disordered stretches follow at residues 3464-3608 and 3620-3643; these read GIHS…GQPA and TQNP…SNFS. Polar residues predominate over residues 3476–3489; the sequence is SGPQVSNFTQTVDA. The span at 3508-3529 shows a compositional bias: low complexity; the sequence is SPTSPGGSPSSPSSGQRSASPS. 3 positions are modified to phosphoserine: S3511, S3515, and S3527. Residues 3591–3603 are compositionally biased toward polar residues; the sequence is QDTASVEQSSQKE. Residues 3666–3747 form the FYR C-terminal domain; sequence KKGLVFEISS…KHCRNYKFRF (82 aa). Positions 3762 to 3767 match the WDR5 interaction motif (WIN) motif; that stretch reads GSARAE. The disordered stretch occupies residues 3785-3808; sequence HRQPPEYNPNDEEEEEVQLKSARR. Residues 3829-3945 enclose the SET domain; it reads EAVGVYRSPI…RGEELTYDYK (117 aa). Residues H3839 and R3841 each contribute to the S-adenosyl-L-methionine site. An S-methylcysteine; by autocatalysis modification is found at C3882. Residues Y3883 and 3906 to 3907 contribute to the S-adenosyl-L-methionine site; that span reads NH. Zn(2+) is bound by residues C3909 and C3957. Positions 3953–3969 constitute a Post-SET domain; sequence NKLPCNCGAKKCRKFLN. N3958 lines the S-adenosyl-L-methionine pocket. The Zn(2+) site is built by C3959 and C3964.

It belongs to the class V-like SAM-binding methyltransferase superfamily. Histone-lysine methyltransferase family. TRX/MLL subfamily. MLL cleavage product N320 heterodimerizes with MLL cleavage product C180 (via SET and FYRC domains). Component of some MLL1/MLL complex, at least composed of the core components KMT2A/MLL1, ASH2L, HCFC1/HCF1, HCFC2, WDR5, DPY30 and RBBP5, as well as the facultative components BACC1, CHD8, E2F6, HSP70, INO80C, KANSL1, LAS1L, MAX, MCRS1, MEN1, MGA, KAT8/MOF, PELP1, PHF20, PRP31, RING2, RUVB1/TIP49A, RUVB2/TIP49B, SENP3, TAF1, TAF4, TAF6, TAF7, TAF9 and TEX10. Forms a core complex with the evolutionary conserved subcomplex WRAD composed of WDR5, RBBP5, ASH2L/ASH2 and DPY30 subunits; WRAD differentially stimulates the methyltransferase activity. Interacts (via WIN motif) with WDR5; the interaction is direct. Interaction with WDR5 is required for stable interaction with ASH2L and RBBP5, and thereby also for optimal histone methyltransferase activity. Interacts with KAT8/MOF; the interaction is direct. Interacts with SBF1 and PPP1R15A. Interacts with ZNF335. Interacts with CLOCK and BMAL1 in a circadian manner. Interacts with PPIE; this results in decreased histone H3 methyltransferase activity. Interacts with CREBBP. Interacts with the WRAD complex composed of WDR5, RBBP5, ASH2L and DPY30. Interacts (via MBM motif) with MEN1. Interacts (via IBM motifs) with PSIP1 (via IBD domain) with moderate affinity whereas the KMT2A-MEN1 complex interacts with a greater affinity; MEN1 enhances interaction of KMT2A with PSIP1. Phosphorylation increases its affinity for PSIP1. Forms a complex with CREBBP and CREB1. In terms of assembly, (Microbial infection) Interacts with herpes virus 8/HHV-8 protein LANA1; this interaction regulates the MLL1 histone methyltransferase activity on viral DNA. Proteolytic cleavage by TASP1 generates MLL cleavage product N320 and MLL cleavage product C180, which reassemble through a non-covalent association. 2 cleavage sites exist, cleavage site 1 (CS1) and cleavage site 2 (CS2), to generate MLL cleavage products N320 and C180. CS2 is the major site. In terms of processing, phosphorylation increases its interaction with PSIP1. Post-translationally, auto-methylated at Cys-3882: auto-methylation is inhibited by the WRAD complex and unmodified histone H3. As to expression, heart, lung, brain and T- and B-lymphocytes.

The protein resides in the nucleus. The enzyme catalyses L-lysyl(4)-[histone H3] + S-adenosyl-L-methionine = N(6)-methyl-L-lysyl(4)-[histone H3] + S-adenosyl-L-homocysteine + H(+). It catalyses the reaction N(6)-methyl-L-lysyl(4)-[histone H3] + S-adenosyl-L-methionine = N(6),N(6)-dimethyl-L-lysyl(4)-[histone H3] + S-adenosyl-L-homocysteine + H(+). It carries out the reaction L-cysteinyl-[protein] + S-adenosyl-L-methionine = S-methyl-L-cysteinyl-[protein] + S-adenosyl-L-homocysteine + H(+). Histone methyltransferase that plays an essential role in early development and hematopoiesis. Catalytic subunit of the MLL1/MLL complex, a multiprotein complex that mediates both methylation of 'Lys-4' of histone H3 (H3K4me) complex and acetylation of 'Lys-16' of histone H4 (H4K16ac). Catalyzes methyl group transfer from S-adenosyl-L-methionine to the epsilon-amino group of 'Lys-4' of histone H3 (H3K4) via a non-processive mechanism. Part of chromatin remodeling machinery predominantly forms H3K4me1 and H3K4me2 methylation marks at active chromatin sites where transcription and DNA repair take place. Has weak methyltransferase activity by itself, and requires other component of the MLL1/MLL complex to obtain full methyltransferase activity. Has no activity toward histone H3 phosphorylated on 'Thr-3', less activity toward H3 dimethylated on 'Arg-8' or 'Lys-9', while it has higher activity toward H3 acetylated on 'Lys-9'. Binds to unmethylated CpG elements in the promoter of target genes and helps maintain them in the nonmethylated state. Required for transcriptional activation of HOXA9. Promotes PPP1R15A-induced apoptosis. Plays a critical role in the control of circadian gene expression and is essential for the transcriptional activation mediated by the CLOCK-BMAL1 heterodimer. Establishes a permissive chromatin state for circadian transcription by mediating a rhythmic methylation of 'Lys-4' of histone H3 (H3K4me) and this histone modification directs the circadian acetylation at H3K9 and H3K14 allowing the recruitment of CLOCK-BMAL1 to chromatin. Also has auto-methylation activity on Cys-3882 in absence of histone H3 substrate. The sequence is that of Histone-lysine N-methyltransferase 2A (KMT2A) from Homo sapiens (Human).